We begin with the raw amino-acid sequence, 63 residues long: Large ribosomal subunit protein bL32 (63 aa).

Residues 1–45 (MAVQQNKKSRSRRDMRRSHDALTKPTLSVDPTTGETHLRHHMTPD) are disordered. Residues 7–16 (KKSRSRRDMR) show a composition bias toward basic residues. Polar residues predominate over residues 25–35 (PTLSVDPTTGE).

This sequence belongs to the bacterial ribosomal protein bL32 family.

The sequence is that of Large ribosomal subunit protein bL32 from Legionella pneumophila (strain Paris).